Reading from the N-terminus, the 358-residue chain is Phosphate acyltransferase (358 aa).

Residues 336-358 form a disordered region; sequence SAAGAAPASPETAPTPHPSTRAA.

Belongs to the PlsX family. In terms of assembly, homodimer. Probably interacts with PlsY.

The protein resides in the cytoplasm. The enzyme catalyses a fatty acyl-[ACP] + phosphate = an acyl phosphate + holo-[ACP]. It participates in lipid metabolism; phospholipid metabolism. Functionally, catalyzes the reversible formation of acyl-phosphate (acyl-PO(4)) from acyl-[acyl-carrier-protein] (acyl-ACP). This enzyme utilizes acyl-ACP as fatty acyl donor, but not acyl-CoA. This Cupriavidus pinatubonensis (strain JMP 134 / LMG 1197) (Cupriavidus necator (strain JMP 134)) protein is Phosphate acyltransferase.